Here is a 264-residue protein sequence, read N- to C-terminus: Small ribosomal subunit protein eS1 (264 aa).

Residues 232 to 264 form a disordered region; sequence HGEGGGSGKPSGDETGAKVERADGYEPPVQESV. Residues 242–255 are compositionally biased toward basic and acidic residues; the sequence is SGDETGAKVERADG.

This sequence belongs to the eukaryotic ribosomal protein eS1 family. In terms of assembly, component of the small ribosomal subunit. Mature ribosomes consist of a small (40S) and a large (60S) subunit. The 40S subunit contains about 33 different proteins and 1 molecule of RNA (18S). The 60S subunit contains about 49 different proteins and 3 molecules of RNA (28S, 5.8S and 5S). Part of the small subunit (SSU) processome, composed of more than 70 proteins and the RNA chaperone small nucleolar RNA (snoRNA) U3.

The protein localises to the cytoplasm. It is found in the nucleus. Its subcellular location is the nucleolus. Functionally, component of the small ribosomal subunit. The ribosome is a large ribonucleoprotein complex responsible for the synthesis of proteins in the cell. Part of the small subunit (SSU) processome, first precursor of the small eukaryotic ribosomal subunit. During the assembly of the SSU processome in the nucleolus, many ribosome biogenesis factors, an RNA chaperone and ribosomal proteins associate with the nascent pre-rRNA and work in concert to generate RNA folding, modifications, rearrangements and cleavage as well as targeted degradation of pre-ribosomal RNA by the RNA exosome. May play a role during erythropoiesis. This Ophiophagus hannah (King cobra) protein is Small ribosomal subunit protein eS1.